The sequence spans 80 residues: Late cornified envelope protein 6A (80 aa).

The segment covering 1–10 has biased composition (polar residues); it reads MSQQKQQSWK. Disordered stretches follow at residues 1-21 and 35-60; these read MSQQ…SPPQ and GAPH…ARQK.

Belongs to the LCE family.

Its function is as follows. Precursors of the cornified envelope of the stratum corneum. This chain is Late cornified envelope protein 6A (LCE6A), found in Homo sapiens (Human).